Reading from the N-terminus, the 420-residue chain is UDP-N-acetylglucosamine 1-carboxyvinyltransferase (420 aa).

A phosphoenolpyruvate-binding site is contributed by 22-23; that stretch reads KN. UDP-N-acetyl-alpha-D-glucosamine is bound at residue R94. C118 acts as the Proton donor in catalysis. C118 carries the 2-(S-cysteinyl)pyruvic acid O-phosphothioketal modification. Positions 306 and 328 each coordinate UDP-N-acetyl-alpha-D-glucosamine.

It belongs to the EPSP synthase family. MurA subfamily.

The protein localises to the cytoplasm. It carries out the reaction phosphoenolpyruvate + UDP-N-acetyl-alpha-D-glucosamine = UDP-N-acetyl-3-O-(1-carboxyvinyl)-alpha-D-glucosamine + phosphate. The protein operates within cell wall biogenesis; peptidoglycan biosynthesis. Functionally, cell wall formation. Adds enolpyruvyl to UDP-N-acetylglucosamine. This chain is UDP-N-acetylglucosamine 1-carboxyvinyltransferase, found in Jannaschia sp. (strain CCS1).